We begin with the raw amino-acid sequence, 235 residues long: Homeobox-leucine zipper protein ATHB-12 (235 aa).

The segment at residues 27–86 (KSNNQKRFSEEQIKSLELIFESETRLEPRKKVQVARELGLQPRQVAIWFQNKRARWKTKQ) is a DNA-binding region (homeobox). The interval 87–122 (LEKEYNTLRANYNNLASQFEIMKKEKQSLVSELQRL) is leucine-zipper. Composition is skewed to basic and acidic residues over residues 128 to 138 (RPKEEKHHECC) and 152 to 162 (HNGKSEPEGRL). Residues 128 to 167 (RPKEEKHHECCGDQGLALSSSTESHNGKSEPEGRLDQGSV) form a disordered region.

This sequence belongs to the HD-ZIP homeobox family. Class I subfamily. As to quaternary structure, interacts with TFIIB1. As to expression, widely expressed.

Its subcellular location is the nucleus. Functionally, probable transcription activator that may act as growth regulators in response to water deficit. The polypeptide is Homeobox-leucine zipper protein ATHB-12 (ATHB-12) (Arabidopsis thaliana (Mouse-ear cress)).